A 422-amino-acid polypeptide reads, in one-letter code: MSTGKESSKAYADIESRGDYKDDGKKGSTLSSKQHFMLSLTFILIGLSSLNVWNTALGLNINFKYNTFQITGLVCSSIVALFVEIPKIMLPFLLGGLSILCAGFQISHSFFTDTQFDTYCLVAFIVIGVVAGLAQTIAFNIGSTMEDNMGGYMSAGIGISGVFIFVINLLLDQFVSPEKHYGVNKAKLLYLYIICELCLILAIVFCVCNLDLTNKNNKKDEENKENNATLSYMELFKDSYKAILTMFLVNWLTLQLFPGVGHKKWQESHNISDYNVTIIVGMFQVFDFLSRYPPNLTHIKIFKNFTFSLNKLLVANSLRLLFIPWFILNACVDHPFFKNIVQQCVCMAMLAFTNGWFNTVPFLVFVKELKKAKKKKEIEIISTFLVIAMFVGLFCGIWTTYIYNLFNIVLPKPDLPPIDVTQ.

The Cytoplasmic segment spans residues 1 to 38 (MSTGKESSKAYADIESRGDYKDDGKKGSTLSSKQHFML). The chain crosses the membrane as a helical span at residues 39-59 (SLTFILIGLSSLNVWNTALGL). Position 53 (Trp-53) interacts with inosine. Residues 60-63 (NINF) are Extracellular-facing. Residues 64-82 (KYNTFQITGLVCSSIVALF) form a helical membrane-spanning segment. At 83-87 (VEIPK) the chain is on the cytoplasmic side. Residues 88–107 (IMLPFLLGGLSILCAGFQIS) traverse the membrane as a helical segment. Over 108 to 116 (HSFFTDTQF) the chain is Extracellular. The chain crosses the membrane as a helical span at residues 117–139 (DTYCLVAFIVIGVVAGLAQTIAF). Residue Gln-135 coordinates inosine. The Cytoplasmic segment spans residues 140 to 149 (NIGSTMEDNM). The chain crosses the membrane as a helical span at residues 150–174 (GGYMSAGIGISGVFIFVINLLLDQF). Residues 175–185 (VSPEKHYGVNK) are Extracellular-facing. The helical transmembrane segment at 186 to 208 (AKLLYLYIICELCLILAIVFCVC) threads the bilayer. Residues 209–241 (NLDLTNKNNKKDEENKENNATLSYMELFKDSYK) lie on the Cytoplasmic side of the membrane. Residues 242–265 (AILTMFLVNWLTLQLFPGVGHKKW) form a helical membrane-spanning segment. Residues 266–274 (QESHNISDY) lie on the Extracellular side of the membrane. Residues 275–294 (NVTIIVGMFQVFDFLSRYPP) form a helical membrane-spanning segment. Positions 287 and 291 each coordinate inosine. Over 295–309 (NLTHIKIFKNFTFSL) the chain is Cytoplasmic. Residues 310-330 (NKLLVANSLRLLFIPWFILNA) form a helical membrane-spanning segment. Over 331–338 (CVDHPFFK) the chain is Extracellular. Residues 339–362 (NIVQQCVCMAMLAFTNGWFNTVPF) traverse the membrane as a helical segment. Topologically, residues 363 to 374 (LVFVKELKKAKK) are cytoplasmic. The chain crosses the membrane as a helical span at residues 375-397 (KKEIEIISTFLVIAMFVGLFCGI). Topologically, residues 398 to 422 (WTTYIYNLFNIVLPKPDLPPIDVTQ) are extracellular.

This sequence belongs to the SLC29A/ENT transporter (TC 2.A.57) family.

The protein localises to the cell membrane. It carries out the reaction inosine(in) = inosine(out). It catalyses the reaction adenosine(in) = adenosine(out). The enzyme catalyses hypoxanthine(out) = hypoxanthine(in). The catalysed reaction is guanosine(in) = guanosine(out). It carries out the reaction guanine(out) = guanine(in). It catalyses the reaction thymidine(in) = thymidine(out). The enzyme catalyses uridine(out) = uridine(in). The catalysed reaction is uracil(in) = uracil(out). It carries out the reaction thymine(out) = thymine(in). It catalyses the reaction adenine(out) = adenine(in). The enzyme catalyses cytosine(out) = cytosine(in). The catalysed reaction is xanthine(out) = xanthine(in). With respect to regulation, GSK4 (5-methyl-N-[2-(2-oxo-1-azepanyl)ethyl]-2-phenyl-1,3-oxazole-4-carbox-amide) disrupts the transport activity at 500 nM. Inhibited partially by 10 uM dipyridamole. Inhibited partially by N,N'-1,3-benzothiazole-2,6-diyldi(2-furamide), 2-bromo-N-(4-[1,3]oxazolo[4,5-b]pyridin-2-ylphenyl)benzamide, 4-methyl-7-[(3,4,5-trimethoxybenzyl)oxy]-2H-chromen-2-one, 2-(1-methyl-1H-indol-3-yl)-2-oxo-N-[4-(pyrrolidin-1-ylcarbonyl)phenyl]acet amide and 2-[2-(2-methylphenyl)vinyl]-4(3H)-quinazolinone. Its function is as follows. Sodium-independent nucleoside and nucleobase transporter with a broad substrate specificity. Plays a key role in the utilization of host purine sources by P.falciparum during intraerythrocytic development enabling parasite growth in the presence of physiological concentrations of adenosine, inosine, guanine, guanosine, xanthine and hypoxanthine. Essential for parasite transition from ring to trophozoite or from trophozoite to schizont stage but not for erythrocyte invasion by merozoites. In Plasmodium falciparum (isolate 3D7), this protein is Nucleoside transporter 1.